We begin with the raw amino-acid sequence, 357 residues long: Malonyl CoA reductase (NADP) (357 aa).

13–16 contributes to the NADP(+) binding site; that stretch reads TGLV. Cys-150 serves as the catalytic Acyl-thioester intermediate. 180–181 provides a ligand contact to NADP(+); the sequence is SG. The active-site Proton acceptor is the His-245. 332–333 provides a ligand contact to NADP(+); the sequence is NT.

Belongs to the aspartate-semialdehyde dehydrogenase family. Homotetramer.

The catalysed reaction is 3-oxopropanoate + NADP(+) + CoA = malonyl-CoA + NADPH + H(+). In terms of biological role, catalyzes the reduction of malonyl-CoA to malonate semialdehyde, a key step in the 3-hydroxypropanoate and the 3-hydroxypropanoate/4-hydroxybutyrate cycles. The sequence is that of Malonyl CoA reductase (NADP) from Metallosphaera sedula (strain ATCC 51363 / DSM 5348 / JCM 9185 / NBRC 15509 / TH2).